The following is a 464-amino-acid chain: 3-isopropylmalate dehydratase large subunit (464 aa).

Positions 337, 397, and 400 each coordinate [4Fe-4S] cluster.

This sequence belongs to the aconitase/IPM isomerase family. LeuC type 1 subfamily. In terms of assembly, heterodimer of LeuC and LeuD. It depends on [4Fe-4S] cluster as a cofactor.

The catalysed reaction is (2R,3S)-3-isopropylmalate = (2S)-2-isopropylmalate. It participates in amino-acid biosynthesis; L-leucine biosynthesis; L-leucine from 3-methyl-2-oxobutanoate: step 2/4. Its function is as follows. Catalyzes the isomerization between 2-isopropylmalate and 3-isopropylmalate, via the formation of 2-isopropylmaleate. This is 3-isopropylmalate dehydratase large subunit from Bacillus cereus (strain G9842).